A 20-amino-acid polypeptide reads, in one-letter code: Apidaecin 2+ (20 aa).

The span at 1–13 (GKPNKPRPAPIKP) shows a compositional bias: pro residues. The disordered stretch occupies residues 1-20 (GKPNKPRPAPIKPRPPHPRL).

Its subcellular location is the secreted. Functionally, antimicrobial peptide active against many Gram-negative enterobacterial and plant-associated bacterial species. Not active against other bacterial species like H.pylori, P.mirabilis, B.pertussis or N.gonorrhoeae. This chain is Apidaecin 2+, found in Pimpla disparis (Parasitic wasp).